The following is an 87-amino-acid chain: Small ribosomal subunit protein bS20 (87 aa).

Positions 1–20 are disordered; it reads MANHKSAEKRARQTIKRTER.

The protein belongs to the bacterial ribosomal protein bS20 family.

Its function is as follows. Binds directly to 16S ribosomal RNA. This is Small ribosomal subunit protein bS20 from Campylobacter lari (strain RM2100 / D67 / ATCC BAA-1060).